A 236-amino-acid polypeptide reads, in one-letter code: MTRRYWNINLEEMMEAGVHFGHGTRKWNPKMAPYISAKRKGIHITNLTRTARFLSEACDLVFDAASRGKQFLIVGTKNKAADSVEWAAIRARCHYVNKKWLGGMLTNWSTTETRLHKFRDLRMEQKTGRLNRLPKRDAAMLKRQLSRLQTYLGGIKYMTGVPDIVIIVDQHEEYTALRECITLGIPTICLTDTNCDPDLADISIPANDDAISSIRLILNKLVFAICEGRSSYIRNP.

The protein belongs to the universal ribosomal protein uS2 family.

Its subcellular location is the plastid. The protein localises to the chloroplast. This chain is Small ribosomal subunit protein uS2c (rps2), found in Nicotiana tabacum (Common tobacco).